A 151-amino-acid polypeptide reads, in one-letter code: Large ribosomal subunit protein uL15 (151 aa).

Positions 1 to 60 (MAENNPLKIHNLRPAPGAKTAKTRVGRGEASKGKTAGRGTKGTKARYQVPERFEGGQMPL) are disordered.

It belongs to the universal ribosomal protein uL15 family. Part of the 50S ribosomal subunit.

Its function is as follows. Binds to the 23S rRNA. The chain is Large ribosomal subunit protein uL15 from Streptomyces avermitilis (strain ATCC 31267 / DSM 46492 / JCM 5070 / NBRC 14893 / NCIMB 12804 / NRRL 8165 / MA-4680).